A 1522-amino-acid polypeptide reads, in one-letter code: Lysine-specific demethylase 5B (1522 aa).

The JmjN domain maps to 10–51; sequence CPVFEPSWEEFADPFAFIHKIRPIAEQTGICKVRPPPDWQPP. The ARID domain occupies 75 to 165; that stretch reads TRVKLNFLDQ…ILYPYNLFQS (91 aa). Residues 180-192 are compositionally biased toward basic and acidic residues; sequence DTKDKEYKPHDIP. Residues 180 to 229 form a disordered region; the sequence is DTKDKEYKPHDIPQRQSVQPSESCPPARRAKRLRAEATNIKTESDSPEVR. The segment at 284–334 adopts a PHD-type 1 zinc-finger fold; sequence LYVCLLCGSGNDEDRLLLCDGCDDSYHTFCLIPPLHDVPKGDWRCPQCLAQ. Tyr400 is a 2-oxoglutarate binding site. Positions 428 to 594 constitute a JmjC domain; that stretch reads EYLDSGWNLN…LGRQCIEHYR (167 aa). 2 residues coordinate Fe cation: His474 and Glu476. 3 residues coordinate 2-oxoglutarate: Ser482, Asn484, and Lys492. Position 562 (His562) interacts with Fe cation. Residues 667-719 form a C5HC2 zinc finger; that stretch reads CYKCKTTCFMSAVYCPCKPGLLVCLYHVEDLCSCPTYQYKLGYRYTLEELYPM. A PHD-type 2 zinc finger spans residues 1151–1199; it reads LKVCVCQKEPAAPMIQCELCRGFFHTGCVSVPHALQGPRVWLCPQCRRS. Residues 1353–1365 are compositionally biased toward polar residues; it reads LQAEQKPSVGPSN. Disordered regions lie at residues 1353–1373 and 1400–1460; these read LQAE…CCRG and ARVR…DSED. Over residues 1400-1416 the composition is skewed to basic residues; sequence ARVRKMRTPKKKKLKLS. Basic and acidic residues predominate over residues 1426-1442; that stretch reads RMERERERLLEAQRSSE. The segment at 1462–1516 adopts a PHD-type 3 zinc-finger fold; that stretch reads DAICPAVTCLQPEGEEVDWVQCDGSCNQWFHQVCVGISPEMAEKEDYICASCAGK.

It belongs to the JARID1 histone demethylase family. The cofactor is Fe(2+).

The protein resides in the nucleus. It carries out the reaction N(6),N(6),N(6)-trimethyl-L-lysyl(4)-[histone H3] + 3 2-oxoglutarate + 3 O2 = L-lysyl(4)-[histone H3] + 3 formaldehyde + 3 succinate + 3 CO2. Its function is as follows. Histone demethylase that demethylates 'Lys-4' of histone H3, thereby playing a central role in histone code. Does not demethylate histone H3 'Lys-9' or H3 'Lys-27'. Demethylates trimethylated, dimethylated and monomethylated H3 'Lys-4'. Acts as a transcriptional corepressor. May repress the CLOCK-BMAL1 heterodimer-mediated transcriptional activation of the core clock component PER2. This chain is Lysine-specific demethylase 5B (KDM5B), found in Gallus gallus (Chicken).